Consider the following 907-residue polypeptide: Leucine-rich repeat-containing G-protein coupled receptor 5 (907 aa).

An N-terminal signal peptide occupies residues 1–21; the sequence is MDTSRLGVLLSLPVLLQLATG. Residues 22 to 561 are Extracellular-facing; sequence GSSPRSGVLL…EHLLDGWLIR (540 aa). One can recognise an LRRNT domain in the interval 25–66; it reads PRSGVLLRGCPTHCHCEPDGRMLLRVDCSDLGLSELPSNLSV. Intrachain disulfides connect Cys-34/Cys-40 and Cys-38/Cys-52. N-linked (GlcNAc...) asparagine glycans are attached at residues Asn-63 and Asn-77. LRR repeat units lie at residues 67-90, 91-112, 115-136, 139-160, 163-184, 187-208, 211-232, 235-256, 258-279, 282-303, 306-328, 329-350, 353-374, 375-396, 399-420, and 423-446; these read FTSY…PSLR, FLEE…AFTG, SLKV…ALQN, SLQS…CFSG, SLRH…AFRS, ALQA…AFGN, SLVV…CFDG, SLET…IRTL, NLKE…AFVG, SLIT…AFQH, ELRT…TGTA, NLES…VCNQ, NLQV…SVCQ, KLQK…TFQQ, SLRS…AFST, and SLIK…HGLT. An N-linked (GlcNAc...) asparagine glycan is attached at Asn-208. The cysteines at positions 348 and 373 are disulfide-linked. Cysteines 479 and 541 form a disulfide. A glycan (N-linked (GlcNAc...) asparagine) is linked at Asn-500. A helical membrane pass occupies residues 562–582; that stretch reads IGVWTIAVLALTCNALVTSTV. Residues 583–593 lie on the Cytoplasmic side of the membrane; the sequence is FRSPLYISPIK. Residues 594 to 614 form a helical membrane-spanning segment; sequence LLIGVIAAVNMLTGVSSAVLA. Over 615–638 the chain is Extracellular; sequence GVDAFTFGSFARHGAWWENGVGCH. The cysteines at positions 637 and 712 are disulfide-linked. Residues 639 to 659 traverse the membrane as a helical segment; the sequence is VIGFLSIFASESSVFLLTLAA. Topologically, residues 660-682 are cytoplasmic; that stretch reads LERGFSVKYSAKFETKAPFSSLK. Residues 683-703 traverse the membrane as a helical segment; it reads VIILLCALLALTMAAVPLLGG. Residues 704 to 722 are Extracellular-facing; it reads SKYGASPLCLPLPFGEPST. The chain crosses the membrane as a helical span at residues 723 to 743; sequence MGYMVALILLNSLCFLMMTIA. Residues 744–767 lie on the Cytoplasmic side of the membrane; that stretch reads YTKLYCNLDKGDLENIWDCSMVKH. A helical membrane pass occupies residues 768–788; it reads IALLLFTNCILNCPVAFLSFS. At 789-802 the chain is on the extracellular side; that stretch reads SLINLTFISPEVIK. The N-linked (GlcNAc...) asparagine glycan is linked to Asn-792. A helical membrane pass occupies residues 803–823; it reads FILLVVVPLPACLNPLLYILF. Over 824 to 907 the chain is Cytoplasmic; that stretch reads NPHFKEDLVS…LSSVAFVPCL (84 aa).

Belongs to the G-protein coupled receptor 1 family. Identified in a complex composed of RNF43, LGR5 and RSPO1. Also interacts with other R-spondin ligands, including RSPO2, RSPO3 and RSPO4. In terms of tissue distribution, expressed in skeletal muscle, placenta, spinal cord, and various region of brain. Expressed at the base of crypts in colonic and small mucosa stem cells. In premalignant cancer expression is not restricted to the cript base. Overexpressed in cancers of the ovary, colon and liver.

It is found in the cell membrane. The protein resides in the golgi apparatus. The protein localises to the trans-Golgi network membrane. Receptor for R-spondins that potentiates the canonical Wnt signaling pathway and acts as a stem cell marker of the intestinal epithelium and the hair follicle. Upon binding to R-spondins (RSPO1, RSPO2, RSPO3 or RSPO4), associates with phosphorylated LRP6 and frizzled receptors that are activated by extracellular Wnt receptors, triggering the canonical Wnt signaling pathway to increase expression of target genes. In contrast to classical G-protein coupled receptors, does not activate heterotrimeric G-proteins to transduce the signal. Involved in the development and/or maintenance of the adult intestinal stem cells during postembryonic development. The protein is Leucine-rich repeat-containing G-protein coupled receptor 5 (LGR5) of Homo sapiens (Human).